We begin with the raw amino-acid sequence, 982 residues long: Serine/threonine-protein kinase PknD (982 aa).

The Protein kinase domain occupies 51–342 (YQIIKSIGKG…ELIRDIENYL (292 aa)). Residues 57–65 (IGKGGMGEV) and K80 contribute to the ATP site. The active-site Proton acceptor is D186.

The protein belongs to the protein kinase superfamily. Ser/Thr protein kinase family. Autophosphorylated on serine and threonine residues.

The catalysed reaction is L-seryl-[protein] + ATP = O-phospho-L-seryl-[protein] + ADP + H(+). The enzyme catalyses L-threonyl-[protein] + ATP = O-phospho-L-threonyl-[protein] + ADP + H(+). Together with the serine/threonine kinase Pkn1, may play a role in the specific interactions with host proteins during intracellular growth. The protein is Serine/threonine-protein kinase PknD of Protochlamydia amoebophila (strain UWE25).